Consider the following 370-residue polypeptide: Chaperone protein DnaJ (370 aa).

The J domain maps to 6-70; that stretch reads DFYEILGVSK…QKRANYDQFG (65 aa). A CR-type zinc finger spans residues 134–216; the sequence is GANKSVTLNV…CHGKGFNTKR (83 aa). Zn(2+) is bound by residues Cys147, Cys150, Cys164, Cys167, Cys190, Cys193, Cys204, and Cys207. CXXCXGXG motif repeat units lie at residues 147 to 154, 164 to 171, 190 to 197, and 204 to 211; these read CTSCHGSG, CSRCGGTG, CPDCGGSG, and CGECHGKG.

The protein belongs to the DnaJ family. Homodimer. Zn(2+) serves as cofactor.

The protein localises to the cytoplasm. Its function is as follows. Participates actively in the response to hyperosmotic and heat shock by preventing the aggregation of stress-denatured proteins and by disaggregating proteins, also in an autonomous, DnaK-independent fashion. Unfolded proteins bind initially to DnaJ; upon interaction with the DnaJ-bound protein, DnaK hydrolyzes its bound ATP, resulting in the formation of a stable complex. GrpE releases ADP from DnaK; ATP binding to DnaK triggers the release of the substrate protein, thus completing the reaction cycle. Several rounds of ATP-dependent interactions between DnaJ, DnaK and GrpE are required for fully efficient folding. Also involved, together with DnaK and GrpE, in the DNA replication of plasmids through activation of initiation proteins. The chain is Chaperone protein DnaJ from Erysipelothrix rhusiopathiae.